Here is a 718-residue protein sequence, read N- to C-terminus: Protein Smaug homolog 1 (718 aa).

Position 168 is a phosphoserine (Ser-168). Disordered regions lie at residues 278–323 (ARGP…EEGS), 416–474 (KAYS…LQPH), and 572–601 (NRGF…QYQI). The region spanning 323–391 (SGMKDVPAWL…ERQNLLKSLE (69 aa)) is the SAM domain. A Phosphoserine modification is found at Ser-420. A Phosphothreonine modification is found at Thr-424. Low complexity predominate over residues 453–466 (GAAATGATATPSAG). Arg-573 bears the Omega-N-methylarginine mark. Ser-580 is modified (phosphoserine).

Belongs to the SMAUG family.

It is found in the cytoplasm. The protein localises to the cell projection. The protein resides in the dendrite. It localises to the synapse. Its subcellular location is the synaptosome. Its function is as follows. Acts as a translational repressor of SRE-containing messengers. The chain is Protein Smaug homolog 1 (SAMD4A) from Homo sapiens (Human).